The chain runs to 377 residues: Bradyzoite pseudokinase 1 (377 aa).

The N-terminal stretch at 1 to 26 (MANTSVRRRQLLSSVLLLQWLTTVLG) is a signal peptide. A disordered region spans residues 39-58 (HGQFPSLRRTEGVSQSGSGH). The region spanning 48 to 354 (TEGVSQSGSG…IEEIMKDPLF (307 aa)) is the Protein kinase domain.

Belongs to the protein kinase superfamily. STE Ser/Thr protein kinase family. WNG subfamily. Forms a complex composed of BPK1, MCP4, MAG1, GRA8 and GRA9. Interacts with MCP4. Interacts with MAG1. Interacts with GRA8. Interacts with GRA9.

It localises to the secreted. Functionally, required for the growth, maintenance, and/or stability, and thus infectivity, of bradyzoite cysts. This chain is Bradyzoite pseudokinase 1, found in Toxoplasma gondii.